We begin with the raw amino-acid sequence, 333 residues long: Trans-enoyl reductase apdC (333 aa).

NADP(+) is bound at residue Phe-45–Lys-48. Val-131–Met-138 contacts substrate. NADP(+) contacts are provided by residues Ser-167–Asn-170, Tyr-185, and Leu-232–Asp-233. Ser-252–Tyr-256 lines the substrate pocket. Val-321–Ser-322 contributes to the NADP(+) binding site.

Belongs to the zinc-containing alcohol dehydrogenase family. Monomer.

Its pathway is secondary metabolite biosynthesis. Trans-enoyl reductase; part of the gene cluster that mediates the biosynthesis of aspyridones. The polyketide-amino acid backbone preaspyridone A is first assembled by the PKS-NRPS hybrid apdA. The assembly of preaspyridone A is initiated by loading of malonyl-CoA onto apdA, followed by decarboxylation to yield the acetyl starter unit. The growing polyketide chain then elongates into a tetraketide. The adpA PKS module catalyzes three Claisen condensations, as well as beta-keto processing and methylation. Alpha-methylation step during polyketide synthesis is a prerequisite and a key checkpoint for chain transfer between PKS and NRPS modules. The downstream NRPS module contains the condensation (C), adenylation (A), and thiolation (T) domains and catalyzes the incorporation of tyrosine via the formation of the L-tyrosinyl-thioester and the amide linkage between L-tyrosinyl-thioester and the tetraketide. The bimodular assembly line is terminated with a reductase (R) domain that facilitates formation and release of the tetramic acid product. Because apdA lacks a designated enoylreductase (ER) domain, the required activity is provided the enoyl reductase apdC. ApdC appears to operate with different stereoselectivity in different PKS cycle. Combined with apdC, apdA is proposed to synthesize preaspyridone A via about 20 enzymatic steps. A number of oxidative steps performed successively by the cytochrome P450 monooxygenases apdE and apdB are required for the conversion of preaspyridone A to aspyridone A. The cytochrome P450 monooxygenase apdE is responsible for the oxidative dephenylation of preaspyridone A. Finally, the predicted FAD-dependent monooxygenase apdD and the acyl-CoA dehydrogenase apdG may be involved in the transformation of aspyridone A into aspyridone B. This chain is Trans-enoyl reductase apdC, found in Emericella nidulans (strain FGSC A4 / ATCC 38163 / CBS 112.46 / NRRL 194 / M139) (Aspergillus nidulans).